The sequence spans 3750 residues: Cubilin homolog (3750 aa).

A signal peptide spans 1–28 (MEGAARSRLLLCWTLLAIITDTWPIAEG). N-linked (GlcNAc...) asparagine glycans are attached at residues Asn-51 and Asn-123. Positions 154–190 (EANSCASGPCENGGTCYNTYTGFRCQCRSAFEGTKCE) constitute an EGF-like 1 domain. 6 disulfide bridges follow: Cys-158/Cys-169, Cys-163/Cys-178, Cys-180/Cys-189, Cys-196/Cys-212, Cys-206/Cys-221, and Cys-223/Cys-232. Residues 192 to 233 (DVNECALYEGTDLGCQNGGQCQNHFGTYSCLCQPGWHGMHCT) form the EGF-like 2; calcium-binding domain. An EGF-like 3; calcium-binding domain is found at 282–308 (DVDECSDSAAHKPCSTSCINLPGSFTC). One can recognise an EGF-like 4; calcium-binding domain in the interval 324 to 352 (DLDECQTNNGGCSLSPKVDCINTYGSYHC). A glycan (N-linked (GlcNAc...) asparagine) is linked at Asn-424. 2 consecutive EGF-like domains span residues 426–463 (TTTNCKENPCLNGGICLFAGPSNYTCLCPIGFRPPICE) and 465–503 (QPSPCDQHPCKNGGRCRPTTSGDLFVCQCLPGYRGRLCE). 7 disulfides stabilise this stretch: Cys-430–Cys-441, Cys-435–Cys-451, Cys-453–Cys-462, Cys-469–Cys-480, Cys-474–Cys-491, Cys-493–Cys-502, and Cys-509–Cys-535. Asn-448 is a glycosylation site (N-linked (GlcNAc...) asparagine). CUB domains lie at 509–623 (CNGM…WNSM), 627–738 (CGGR…YSVE), 744–852 (CGGV…YRMA), 853–971 (CDYK…YRAL), 978–1095 (CGGV…YTFE), 1100–1212 (CGGH…WRIF), 1216–1331 (CGGS…YKAN), 1332–1434 (CIRN…QLDY), 1439–1550 (CMEE…YRTV), 1554–1670 (CGGK…FHES), 1671–1788 (CGQT…YMTM), 1792–1902 (CGSI…YNYE), and 1903–2001 (HHNE…WNRL). Asn-542 and Asn-548 each carry an N-linked (GlcNAc...) asparagine glycan. Cys-562 and Cys-584 are disulfide-bonded. Asn-609 carries an N-linked (GlcNAc...) asparagine glycan. Disulfide bonds link Cys-627–Cys-654, Cys-681–Cys-701, Cys-744–Cys-770, Cys-853–Cys-879, Cys-913–Cys-933, and Cys-978–Cys-1004. The N-linked (GlcNAc...) asparagine glycan is linked to Asn-871. Ca(2+) is bound by residues Glu-1026, Asp-1034, and Asp-1080. The cysteines at positions 1031 and 1058 are disulfide-linked. Cys-1100 and Cys-1126 are oxidised to a cystine. Residue Asn-1119 is glycosylated (N-linked (GlcNAc...) asparagine). Residue Glu-1148 coordinates Ca(2+). N-linked (GlcNAc...) asparagine glycosylation is present at Asn-1152. A disulfide bond links Cys-1153 and Cys-1175. Ca(2+) is bound by residues Asp-1156 and Asp-1197. Cys-1216 and Cys-1242 form a disulfide bridge. The Ca(2+) site is built by Glu-1264, Asp-1272, and Asp-1316. Residues Cys-1269 and Cys-1292 are joined by a disulfide bond. A disulfide bridge connects residues Cys-1332 and Cys-1360. N-linked (GlcNAc...) asparagine glycans are attached at residues Asn-1335, Asn-1359, Asn-1413, and Asn-1424. The cysteines at positions 1439 and 1465 are disulfide-linked. Asn-1491 carries N-linked (GlcNAc...) asparagine glycosylation. 7 disulfide bridges follow: Cys-1492–Cys-1513, Cys-1554–Cys-1580, Cys-1607–Cys-1631, Cys-1671–Cys-1697, Cys-1733–Cys-1755, Cys-1792–Cys-1818, and Cys-1845–Cys-1866. An N-linked (GlcNAc...) asparagine glycan is attached at Asn-1694. Residues Asn-1908 and Asn-2009 are each glycosylated (N-linked (GlcNAc...) asparagine). 2 disulfides stabilise this stretch: Cys-2019-Cys-2048 and Cys-2077-Cys-2100. 5 CUB domains span residues 2019-2139 (CGNQ…VRTA), 2140-2256 (CGSE…FRFE), 2262-2383 (DSGR…LSVA), 2385-2512 (CGGS…YTSL), and 2516-2646 (CGET…MNEV). N-linked (GlcNAc...) asparagine glycosylation is found at Asn-2092, Asn-2128, Asn-2152, and Asn-2231. Cys-2140 and Cys-2167 are joined by a disulfide. Cysteines 2324 and 2346 form a disulfide. N-linked (GlcNAc...) asparagine glycosylation occurs at Asn-2377. Cys-2385 and Cys-2416 are oxidised to a cystine. Asn-2442 carries N-linked (GlcNAc...) asparagine glycosylation. 2 cysteine pairs are disulfide-bonded: Cys-2445/Cys-2474 and Cys-2516/Cys-2542. N-linked (GlcNAc...) asparagine glycans are attached at residues Asn-2655, Asn-2671, Asn-2682, and Asn-2772. Cystine bridges form between Cys-2761-Cys-2790 and Cys-2837-Cys-2859. CUB domains lie at 2761 to 2895 (CGGV…IKYG), 2898 to 3010 (CGGK…FERN), 3011 to 3128 (CGGL…YTSR), 3130 to 3246 (CGGI…VRVM), 3249 to 3364 (CDEK…INAI), 3368 to 3512 (CGSS…VALN), 3522 to 3615 (LQGR…YLAS), and 3623 to 3736 (CGGQ…FAGV). Asn-2885 and Asn-2889 each carry an N-linked (GlcNAc...) asparagine glycan. 2 cysteine pairs are disulfide-bonded: Cys-2898-Cys-2921 and Cys-2949-Cys-2973. Asn-2960, Asn-2965, and Asn-2982 each carry an N-linked (GlcNAc...) asparagine glycan. A disulfide bond links Cys-3011 and Cys-3039. Asn-3040 and Asn-3074 each carry an N-linked (GlcNAc...) asparagine glycan. Intrachain disulfides connect Cys-3070–Cys-3092 and Cys-3130–Cys-3157. Residue Asn-3160 is glycosylated (N-linked (GlcNAc...) asparagine). 4 disulfides stabilise this stretch: Cys-3184–Cys-3207, Cys-3249–Cys-3278, Cys-3305–Cys-3327, and Cys-3368–Cys-3402. N-linked (GlcNAc...) asparagine glycosylation occurs at Asn-3256. A glycan (N-linked (GlcNAc...) asparagine) is linked at Asn-3427. A disulfide bond links Cys-3430 and Cys-3475. Residues Asn-3543, Asn-3572, and Asn-3645 are each glycosylated (N-linked (GlcNAc...) asparagine). Disulfide bonds link Cys-3560–Cys-3579, Cys-3623–Cys-3649, and Cys-3676–Cys-3699.

Specifically expressed in nephrocytes.

It is found in the cell membrane. In terms of biological role, required in the nephrocyte for normal uptake of proteins and elimination of toxins, and for maintenance of endocytic trafficking structures. May function together with Amnionless. The polypeptide is Cubilin homolog (Drosophila melanogaster (Fruit fly)).